We begin with the raw amino-acid sequence, 232 residues long: Putative B3 domain-containing protein Os11g0242900 (232 aa).

Residues 1-51 (MTVELEKIAGSFFISKGWKTFVHRTGLLSGQYIRFQVLTPSKINVLLFDKK) constitute a DNA-binding region (TF-B3 1). The tract at residues 92–121 (SHTSNKETSSDSRTESMTDIPSSSDNSGET) is disordered. Basic and acidic residues predominate over residues 95–107 (SNKETSSDSRTES). A compositionally biased stretch (polar residues) spans 108 to 121 (MTDIPSSSDNSGET). The TF-B3 2 DNA-binding region spans 140–232 (DIKNYISIIG…PNVKITIDVL (93 aa)).

The protein localises to the nucleus. This Oryza sativa subsp. japonica (Rice) protein is Putative B3 domain-containing protein Os11g0242900.